We begin with the raw amino-acid sequence, 423 residues long: Probable WRKY transcription factor 58 (423 aa).

Disordered stretches follow at residues serine 91–glycine 128, arginine 142–asparagine 171, and isoleucine 215–threonine 284. Composition is skewed to low complexity over residues glutamine 99–proline 111 and histidine 144–valine 162. Residues asparagine 161 to proline 225 constitute a DNA-binding region (WRKY 1). The span at aspartate 259–leucine 271 shows a compositional bias: acidic residues. The segment at residues serine 300 to proline 365 is a DNA-binding region (WRKY 2).

It localises to the nucleus. Functionally, transcription factor. Interacts specifically with the W box (5'-(T)TGAC[CT]-3'), a frequently occurring elicitor-responsive cis-acting element. This Arabidopsis thaliana (Mouse-ear cress) protein is Probable WRKY transcription factor 58 (WRKY58).